Here is a 295-residue protein sequence, read N- to C-terminus: Aspartate carbamoyltransferase catalytic subunit (295 aa).

Residues R54 and T55 each contribute to the carbamoyl phosphate site. K82 serves as a coordination point for L-aspartate. Carbamoyl phosphate contacts are provided by R104, H132, and Q135. 2 residues coordinate L-aspartate: R165 and R218. Carbamoyl phosphate is bound by residues G257 and P258.

Belongs to the aspartate/ornithine carbamoyltransferase superfamily. ATCase family. Heterododecamer (2C3:3R2) of six catalytic PyrB chains organized as two trimers (C3), and six regulatory PyrI chains organized as three dimers (R2).

It catalyses the reaction carbamoyl phosphate + L-aspartate = N-carbamoyl-L-aspartate + phosphate + H(+). It participates in pyrimidine metabolism; UMP biosynthesis via de novo pathway; (S)-dihydroorotate from bicarbonate: step 2/3. Catalyzes the condensation of carbamoyl phosphate and aspartate to form carbamoyl aspartate and inorganic phosphate, the committed step in the de novo pyrimidine nucleotide biosynthesis pathway. The polypeptide is Aspartate carbamoyltransferase catalytic subunit (Wolbachia pipientis subsp. Culex pipiens (strain wPip)).